The sequence spans 336 residues: MKDRYILAVESSCDETSVAILKNDKELLANIIASQVESHKRFGGVVPEVASRHHVEVVTTCFEDALQEAGIVASDLDAVAVTYGPGLVGALLVGMAAAKAFAWANKLPLIPINHMAGHLMAARDVKELQYPLLALLVSGGHTELVYVSEPGDYKIVGETRDDAVGEAYDKVGRVMGLTYPAGREIDQLAHKGQDTYHFPRAMIKEDHLEFSFSGLKSAFINLHHNAEQKGEALVLEDLCASFQAAVLDILLAKTQKALLKYPVKTLVVAGGVAANQGLRERLATDISPDIDVVIPPLRLCGDNAGMIALAAAIEFEKENFASLKLNAKPSLAFESL.

Fe cation contacts are provided by His-114 and His-118. Substrate-binding positions include Leu-136–Gly-140, Asp-169, Gly-182, Asp-186, and Asn-275. A Fe cation-binding site is contributed by Asp-302.

This sequence belongs to the KAE1 / TsaD family. Requires Fe(2+) as cofactor.

Its subcellular location is the cytoplasm. It catalyses the reaction L-threonylcarbamoyladenylate + adenosine(37) in tRNA = N(6)-L-threonylcarbamoyladenosine(37) in tRNA + AMP + H(+). Required for the formation of a threonylcarbamoyl group on adenosine at position 37 (t(6)A37) in tRNAs that read codons beginning with adenine. Is involved in the transfer of the threonylcarbamoyl moiety of threonylcarbamoyl-AMP (TC-AMP) to the N6 group of A37, together with TsaE and TsaB. TsaD likely plays a direct catalytic role in this reaction. This chain is tRNA N6-adenosine threonylcarbamoyltransferase, found in Streptococcus agalactiae serotype V (strain ATCC BAA-611 / 2603 V/R).